The sequence spans 451 residues: uncharacterized protein (451 aa).

The disordered stretch occupies residues 415-435 (AHGDTEWLPPPHLDHGQPRVN).

Belongs to the Rv1128c/1148c/1588c/1702c/1945/3466 family.

This is an uncharacterized protein from Mycobacterium tuberculosis (strain ATCC 25618 / H37Rv).